A 91-amino-acid polypeptide reads, in one-letter code: Tachykinin-like peptide (91 aa).

An N-terminal signal peptide occupies residues 1–19 (MKILVAFAVIMLVSAQVLA). A propeptide spanning residues 20-51 (AEIGLNDEPEWYSDQIQEDLPVFENFLQRIAR) is cleaved from the precursor. M62 carries the methionine amide modification. The tract at residues 64–91 (KRNNGFGQMSRKRSAERNTIHNYERRRK) is disordered. Positions 66–91 (NNGFGQMSRKRSAERNTIHNYERRRK) are excised as a propeptide. The span at 76–91 (RSAERNTIHNYERRRK) shows a compositional bias: basic and acidic residues.

As to expression, expressed by the skin glands.

The protein resides in the secreted. Tachykinins are active peptides which excite neurons, evoke behavioral responses, are potent vasodilators and secretagogues, and contract (directly or indirectly) many smooth muscles. In vitro, induces contraction of guinea pig ileum smooth muscle in a dose-dependent manner. This chain is Tachykinin-like peptide, found in Theloderma corticale (Kwangsi warty tree frog).